Consider the following 401-residue polypeptide: MIYPGRGASLSVAVALVLFSSGAPWTFREEKEDVDREVCSESKIATTKYPCVKSTGEVTTCYRKKCCEGFKFVLGQCIPEDYDVCAGAPCEQQCTDHFGRVVCTCYDGYRYDRERHRNREKPYCLDIDECANNNETVCSQMCVNTPGSYRCDCHSGFYLEDDGKTCTKGERAPLFEKSDNVMKEGTCSATCEDFHQMKMTVLQLKQKMSLLSSNTEINKQMTNEKMMMTTNSFLPGPPGPPGPAGTPGAKGSSGSPGQMGPPGLPGPRGDMGPIGPSPDLSHIKQGRRGPVGPPGAPGRDGMKGERGFPGPSGPPGPPGSFDFLLLMMADIRNDIAELQSKVFSRPLHSSFEDFPSAPDSWRDTPENLDFGSGEDYKSQSPPKSSRKRKLPRNLKNPDWPV.

The signal sequence occupies residues 1–22 (MIYPGRGASLSVAVALVLFSSG). The region spanning 126-167 (DIDECANNNETVCSQMCVNTPGSYRCDCHSGFYLEDDGKTCT) is the EGF-like; calcium-binding domain. Disulfide bonds link cysteine 130–cysteine 142, cysteine 138–cysteine 151, and cysteine 153–cysteine 166. N-linked (GlcNAc...) asparagine glycosylation occurs at asparagine 134. 2 disordered regions span residues 229–321 (TTNS…PGSF) and 344–401 (SRPL…DWPV). 2 Collagen-like domains span residues 234-276 (LPGP…PIGP) and 286-319 (GRRGPVGPPGAPGRDGMKGERGFPGPSGPPGPPG). Residues 235–244 (PGPPGPPGPA) are compositionally biased toward pro residues. Residues 246–258 (TPGAKGSSGSPGQ) show a composition bias toward low complexity.

Belongs to the CCBE1 family. As to expression, not expressed in blood or lymphatic endothelial cells, correlating spatially and temporally with the migration routes of endothelial cells that bud from the PCV, migrate in association with somite boundaries and seed the horizontal myoseptum region from where lymphatic precursors later migrate.

It localises to the secreted. In terms of biological role, required for lymphangioblast budding and angiogenic sprouting from venous endothelium during embryogenesis. Required for the formation of facial lymphatic structures. Necessary for lymphangiogenesis, but is probably not part of either the vegfc-vegfr3 signaling or sox18-prox1 transcriptional pathways. The chain is Collagen and calcium-binding EGF domain-containing protein 1 (ccbe1) from Danio rerio (Zebrafish).